The following is a 462-amino-acid chain: Calcitonin gene-related peptide type 1 receptor (462 aa).

Positions 1–22 (MEKKFFLSFLFLLPFFMILVIA) are cleaved as a signal peptide. The Extracellular portion of the chain corresponds to 23 to 140 (ESEEENPDDL…NTHEKVKTAL (118 aa)). 3 disulfides stabilise this stretch: Cys49-Cys75, Cys66-Cys106, and Cys89-Cys128. N-linked (GlcNAc...) asparagine glycans are attached at residues Asn67, Asn119, and Asn124. A helical transmembrane segment spans residues 141-165 (NLFYLTIIGHVLSIASLLISLGIFF). Topologically, residues 166–176 (YFKSLSCQRIT) are cytoplasmic. The helical transmembrane segment at 177–199 (LHKNLFFSFVCNSVITIIHLTAV) threads the bilayer. Residues 200 to 210 (ANNQALVATNP) lie on the Extracellular side of the membrane. The chain crosses the membrane as a helical span at residues 211–239 (VSCKVSQFIHLYLMGCNYFWMLCEGIYLH). The Cytoplasmic portion of the chain corresponds to 240–253 (TLVVVAVFAEKQHL). The chain crosses the membrane as a helical span at residues 254–274 (MWYYFLGWGFPLIPACIHAVA). Residues 275–290 (RRLYYNDNCWISSDTQ) lie on the Extracellular side of the membrane. Residues 289 to 290 (TQ) are required for RAMP3 interaction. A helical transmembrane segment spans residues 291–315 (LLYIIHGPICAALLVNLFFLLNIVR). Residues 316–330 (VLITKLKVTHQAESN) lie on the Cytoplasmic side of the membrane. The chain crosses the membrane as a helical span at residues 331–352 (LYMKAVRATLILVPLLGIEFVL). At 353–367 (IPWRPEGKIAEEIYD) the chain is on the extracellular side. Residues 368-388 (YIINILMHYQGLLVSTIFCFF) traverse the membrane as a helical segment. The Cytoplasmic portion of the chain corresponds to 389 to 462 (NGEVQAILRR…VVIKPEKLYD (74 aa)). Phosphoserine occurs at positions 421 and 446.

The protein belongs to the G-protein coupled receptor 2 family. In terms of assembly, heterodimer of CALCRL and RAMP1; the receptor complex functions as CGRP receptor. Heterodimer of CALCRL and RAMP2 or CALCRL and RAMP3; the complexes function as adrenomedullin receptor.

Its subcellular location is the cell membrane. Functionally, g protein-coupled receptor which specificity is determined by its interaction with receptor-activity-modifying proteins (RAMPs). Together with RAMP1, form the receptor complex for calcitonin-gene-related peptides CALCA/CGRP1 and CALCB/CGRP2. Together with RAMP2 or RAMP3, function as receptor complexes for adrenomedullin (ADM and ADM2). Ligand binding causes a conformation change that triggers signaling via guanine nucleotide-binding proteins (G proteins) and modulates the activity of downstream effectors. Activates cAMP-dependent pathway. The chain is Calcitonin gene-related peptide type 1 receptor (CALCRL) from Bos taurus (Bovine).